An 89-amino-acid chain; its full sequence is MFFKLVLVSAVAIQALSMSILKSNVKRDQKQLQPCQENQICHEVPNSKYEAPPLVHCLCTGGKRCPMDTSLAHKTTGSGDTLMYLFRCI.

Positions 1–17 (MFFKLVLVSAVAIQALS) are cleaved as a signal peptide.

Belongs to the scoloptoxin-11 family. Post-translationally, contains 3 disulfide bonds. As to expression, expressed by the venom gland.

The protein localises to the secreted. This is U-scoloptoxin(11)-Sm4a from Scolopendra morsitans (Tanzanian blue ringleg centipede).